Here is a 147-residue protein sequence, read N- to C-terminus: Ribosome-binding factor A (147 aa).

The disordered stretch occupies residues 127–147 (AAEARHAGEPDPYKTDRDDAE).

This sequence belongs to the RbfA family. In terms of assembly, monomer. Binds 30S ribosomal subunits, but not 50S ribosomal subunits or 70S ribosomes.

The protein localises to the cytoplasm. One of several proteins that assist in the late maturation steps of the functional core of the 30S ribosomal subunit. Associates with free 30S ribosomal subunits (but not with 30S subunits that are part of 70S ribosomes or polysomes). Required for efficient processing of 16S rRNA. May interact with the 5'-terminal helix region of 16S rRNA. In Nocardia farcinica (strain IFM 10152), this protein is Ribosome-binding factor A.